The primary structure comprises 61 residues: Large ribosomal subunit protein bL28 (61 aa).

This sequence belongs to the bacterial ribosomal protein bL28 family.

The polypeptide is Large ribosomal subunit protein bL28 (Lacticaseibacillus paracasei (strain ATCC 334 / BCRC 17002 / CCUG 31169 / CIP 107868 / KCTC 3260 / NRRL B-441) (Lactobacillus paracasei)).